The sequence spans 490 residues: MLFSLGPLTIVYGLVIFVVAKTIYNLYLHPLRSYPGPLLARATRWYYSYYVKIGLLPQKTKELHDQYGPCVRIAPDELSYNTAEAWEDICGHRTGQRTESFEKDLTFFPPAPNGVDSIVRIDDVHRRFRRLLSHPMSDKALGSQQEIITGYVDQLIHELRQRSERSEVVDMVRWFNFTSFDILGDLAFGESFGCLGSGLMHPWIELIFTSIKSVMDMQIIRRIPGLFSLILTIAGLQQKQDLQEQFMFCQKKARERYTKETTRPDFMTYILRATEEKGMTPEEIEANAQILIMAGSETTASALSGTLFYLLKNSMAMQKLRQEIHATFQAEAEITMRSTQSMEYLHAVLQEAMRVYPPVPCTFPRTTPPGGAMVCGRFVPGGYIVGVNQLAAMTSEKNFKDPLKFIPERWCGDERYQEDSRKAYQPFSYGPRNCLGKNLAYAEMRLVLTRLLWNFEFDLLEESKDWHAKQKVWMMWDKGDLKVRLKPLRH.

A helical membrane pass occupies residues 1–21 (MLFSLGPLTIVYGLVIFVVAK). Asn176 is a glycosylation site (N-linked (GlcNAc...) asparagine). Cys434 contacts heme.

This sequence belongs to the cytochrome P450 family. Heme serves as cofactor.

It localises to the membrane. It participates in mycotoxin biosynthesis. Functionally, cytochrome P450 monooxygenase; part of the gene cluster that mediates the biosynthesis of aspirochlorine (or antibiotic A30641), an unusual halogenated spiro compound with distinctive antifungal properties due to selective inhibition of protein biosynthesis, and which is also active against bacteria, viruses, and murine tumor cells. The non-ribosomal peptide synthetase (NRPS) aclP is responsible the formation of the diketopiperazine (DKP) core from the condensation of 2 phenylalanine residues. One Phe residue is tailored into chlorotyrosine by hydroxylation and chlorination, whereas the second Phe undergoes an unprecedented C-C bond cleavage to be converted into glycine. After formation of the DKP, sulfur is incorporated into the DKP by conjugation with glutathione by aclG, followed by its stepwise degradation to the thiol by aclI, aclJ and aclK, and the dithiol oxidation by aclT. In addition, oxygenases (aclB, aclC, aclL and aclO) and O-methyltransferases (aclM and aclU) act as tailoring enzymes to produce the intermediate dechloroaspirochlorine. Ultimately, chlorination of dechloroaspirochlorine by the halogenase aclH is the last step in the aspirochlorine pathway. The polypeptide is Cytochrome P450 monooxygenase aclL (Aspergillus oryzae (strain ATCC 42149 / RIB 40) (Yellow koji mold)).